Here is an 81-residue protein sequence, read N- to C-terminus: Acyl carrier protein (81 aa).

One can recognise a Carrier domain in the interval 4-79 (AEIKDKVYDI…QAIDYIVNKK (76 aa)). Residue S39 is modified to O-(pantetheine 4'-phosphoryl)serine.

Belongs to the acyl carrier protein (ACP) family. Post-translationally, 4'-phosphopantetheine is transferred from CoA to a specific serine of apo-ACP by AcpS. This modification is essential for activity because fatty acids are bound in thioester linkage to the sulfhydryl of the prosthetic group.

The protein localises to the cytoplasm. The protein operates within lipid metabolism; fatty acid biosynthesis. In terms of biological role, carrier of the growing fatty acid chain in fatty acid biosynthesis. The protein is Acyl carrier protein of Chlorobaculum tepidum (strain ATCC 49652 / DSM 12025 / NBRC 103806 / TLS) (Chlorobium tepidum).